We begin with the raw amino-acid sequence, 195 residues long: uncharacterized protein (195 aa).

This is an uncharacterized protein from Archaeoglobus fulgidus (strain ATCC 49558 / DSM 4304 / JCM 9628 / NBRC 100126 / VC-16).